The primary structure comprises 1049 residues: Dyslexia-associated protein KIAA0319-like protein (1049 aa).

At 1–29 the chain is on the cytoplasmic side; it reads MEKRLGVKPNPASWILSGYYWQTSAKWLR. A helical membrane pass occupies residues 30 to 50; the sequence is TLYLFYTCFCFSVLWLSTDAS. The MANSC domain maps to 49-127; sequence ASESRCQQGK…AFRTHSSNSM (79 aa). At 51–932 the chain is on the extracellular side; sequence ESRCQQGKTQ…ESNCEWSVLY (882 aa). The segment at 234–277 is disordered; sequence TTDLTAELPGGPKNVSAQPEIPEGLATTPSTQQVKSSEKTQIAV. Asn-247, Asn-395, and Asn-487 each carry an N-linked (GlcNAc...) asparagine glycan. PKD domains lie at 310–401, 409–498, 504–594, 600–688, and 694–785; these read VVSA…VKPE, IAIV…VNKA, VANA…VQPE, QADA…VKEE, and IAKI…VKPD. Residues 933-953 form a helical membrane-spanning segment; sequence VIIATFVIVVALGILSWTVIC. Topologically, residues 954 to 1049 are cytoplasmic; it reads CCKRQKGKPK…KARSPREEIL (96 aa). Thr-974 is subject to Phosphothreonine. Phosphoserine is present on residues Ser-978, Ser-1009, and Ser-1031. Residues 1022–1049 are disordered; sequence GKLLHGQNGSVPNGQTPLKARSPREEIL. A compositionally biased stretch (polar residues) spans 1028 to 1037; the sequence is QNGSVPNGQT. Phosphothreonine is present on Thr-1037.

As to quaternary structure, interacts with RTN4R. In terms of processing, N-glycosylated.

It localises to the cytoplasmic granule membrane. The protein resides in the golgi apparatus membrane. It is found in the golgi apparatus. Its subcellular location is the trans-Golgi network membrane. The protein localises to the cell membrane. Possible role in axon guidance through interaction with RTN4R. This Pongo abelii (Sumatran orangutan) protein is Dyslexia-associated protein KIAA0319-like protein.